Here is a 344-residue protein sequence, read N- to C-terminus: tRNA N6-adenosine threonylcarbamoyltransferase (344 aa).

Fe cation-binding residues include histidine 110 and histidine 114. Substrate is bound by residues 132–136 (LVSGG), aspartate 166, glycine 179, aspartate 183, and asparagine 278. Aspartate 306 is a binding site for Fe cation.

The protein belongs to the KAE1 / TsaD family. Fe(2+) serves as cofactor.

It is found in the cytoplasm. The enzyme catalyses L-threonylcarbamoyladenylate + adenosine(37) in tRNA = N(6)-L-threonylcarbamoyladenosine(37) in tRNA + AMP + H(+). Its function is as follows. Required for the formation of a threonylcarbamoyl group on adenosine at position 37 (t(6)A37) in tRNAs that read codons beginning with adenine. Is involved in the transfer of the threonylcarbamoyl moiety of threonylcarbamoyl-AMP (TC-AMP) to the N6 group of A37, together with TsaE and TsaB. TsaD likely plays a direct catalytic role in this reaction. The sequence is that of tRNA N6-adenosine threonylcarbamoyltransferase from Nocardia farcinica (strain IFM 10152).